Here is a 205-residue protein sequence, read N- to C-terminus: Holliday junction resolvase RecU (205 aa).

Positions 1–26 (MIRYPNGKSYQPIQPIGTKKRISGES) are disordered. Mg(2+)-binding residues include threonine 86, aspartate 88, glutamate 101, and glutamine 120.

The protein belongs to the RecU family. The cofactor is Mg(2+).

It localises to the cytoplasm. It catalyses the reaction Endonucleolytic cleavage at a junction such as a reciprocal single-stranded crossover between two homologous DNA duplexes (Holliday junction).. Functionally, endonuclease that resolves Holliday junction intermediates in genetic recombination. Cleaves mobile four-strand junctions by introducing symmetrical nicks in paired strands. Promotes annealing of linear ssDNA with homologous dsDNA. Required for DNA repair, homologous recombination and chromosome segregation. The polypeptide is Holliday junction resolvase RecU (Bacillus pumilus (strain SAFR-032)).